A 290-amino-acid polypeptide reads, in one-letter code: MFKGSIVAIVTPFTNGAVDQEKLRELVEFQITNGTDAIVPCGTTGESSTLDYDEHMDVVKIVIEQVNKRVPVIAGTGSNSTAEAIELSRKAKEAGADGVLLVTPYYNKPTQEGLVRHYTAIADAVAIPQILYNVPGRTGVNMLPETVARLAPHKNIVAIKEATGSLQQASEILALCGDQIDVLSGDDFITFPMMACGAKGVISVLANIMPKAVADLTDAFFAGDLETARRLHLNTLKISNAMFIESNPIPVKTALGLMGKCSDEVRLPLCPMSEGNKAKLTAIMKEYQLI.

T44 contributes to the pyruvate binding site. The active-site Proton donor/acceptor is Y132. K160 functions as the Schiff-base intermediate with substrate in the catalytic mechanism. I202 is a binding site for pyruvate.

This sequence belongs to the DapA family. As to quaternary structure, homotetramer; dimer of dimers.

It localises to the cytoplasm. The catalysed reaction is L-aspartate 4-semialdehyde + pyruvate = (2S,4S)-4-hydroxy-2,3,4,5-tetrahydrodipicolinate + H2O + H(+). It participates in amino-acid biosynthesis; L-lysine biosynthesis via DAP pathway; (S)-tetrahydrodipicolinate from L-aspartate: step 3/4. In terms of biological role, catalyzes the condensation of (S)-aspartate-beta-semialdehyde [(S)-ASA] and pyruvate to 4-hydroxy-tetrahydrodipicolinate (HTPA). This chain is 4-hydroxy-tetrahydrodipicolinate synthase, found in Geobacter sulfurreducens (strain ATCC 51573 / DSM 12127 / PCA).